Reading from the N-terminus, the 536-residue chain is Lysosomal acid glucosylceramidase (536 aa).

An N-terminal signal peptide occupies residues 1–39 (MELSSPSREECPRPQGRVGIMAASLMGLLLLQAASWASG). Intrachain disulfides connect Cys43/Cys55 and Cys57/Cys62. 3 N-linked (GlcNAc...) asparagine glycosylation sites follow: Asn58, Asn98, and Asn185. Glu274 serves as the catalytic Proton donor. Asn309 carries N-linked (GlcNAc...) asparagine glycosylation. Catalysis depends on Glu379, which acts as the Nucleophile. The N-linked (GlcNAc...) asparagine glycan is linked to Asn501.

Belongs to the glycosyl hydrolase 30 family. Interacts with saposin-C. Interacts with SCARB2. Interacts with TCP1. Interacts with GRN; this interaction prevents aggregation of GBA1-SCARB2 complex via interaction with HSPA1A upon stress.

It localises to the lysosome membrane. The catalysed reaction is a beta-D-glucosyl-(1&lt;-&gt;1')-N-acylsphing-4-enine + H2O = an N-acylsphing-4-enine + D-glucose. It catalyses the reaction a beta-D-galactosyl-(1&lt;-&gt;1')-N-acylsphing-4-enine + H2O = an N-acylsphing-4-enine + D-galactose. It carries out the reaction cholesteryl 3-beta-D-glucoside + H2O = cholesterol + D-glucose. The enzyme catalyses a beta-D-glucosyl-(1&lt;-&gt;1')-N-acylsphing-4-enine + cholesterol = cholesteryl 3-beta-D-glucoside + an N-acylsphing-4-enine. The catalysed reaction is beta-D-glucosyl-N-(9Z-octadecenoyl)-sphing-4E-enine + cholesterol = N-(9Z-octadecenoyl)-sphing-4-enine + cholesteryl 3-beta-D-glucoside. It catalyses the reaction beta-D-glucosyl-N-octanoylsphing-4E-enine + cholesterol = N-octanoylsphing-4-enine + cholesteryl 3-beta-D-glucoside. It carries out the reaction beta-D-glucosyl-N-dodecanoylsphing-4-enine + cholesterol = N-dodecanoylsphing-4-enine + cholesteryl 3-beta-D-glucoside. The enzyme catalyses beta-D-glucosyl-(1&lt;-&gt;1)-N-octadecanoylsphing-4-enine + cholesterol = N-octadecanoylsphing-4-enine + cholesteryl 3-beta-D-glucoside. The catalysed reaction is beta-D-glucosyl-(1&lt;-&gt;1')-N-(15Z-tetracosenoyl)-sphing-4-enine + cholesterol = N-(15Z-tetracosenoyl)-sphing-4-enine + cholesteryl 3-beta-D-glucoside. It catalyses the reaction a beta-D-galactosyl-(1&lt;-&gt;1')-N-acylsphing-4-enine + cholesterol = cholesteryl 3-beta-D-galactoside + an N-acylsphing-4-enine. It carries out the reaction 1-(beta-D-galactosyl)-N-dodecanoylsphing-4-enine + cholesterol = cholesteryl 3-beta-D-galactoside + N-dodecanoylsphing-4-enine. The enzyme catalyses a beta-D-xylosyl-(1&lt;-&gt;1')-N-acylsphing-4-enine + cholesterol = cholesteryl 3-beta-D-xyloside + an N-acylsphing-4-enine. The catalysed reaction is beta-D-xylosyl-(1&lt;-&gt;1')-N-(9Z-octadecenoyl)-sphing-4-enine + cholesterol = cholesteryl 3-beta-D-xyloside + N-(9Z-octadecenoyl)-sphing-4-enine. The protein operates within steroid metabolism; cholesterol metabolism. Its pathway is sphingolipid metabolism. Glucosylceramidase that catalyzes, within the lysosomal compartment, the hydrolysis of glucosylceramides/GlcCers (such as beta-D-glucosyl-(1&lt;-&gt;1')-N-acylsphing-4-enine) into free ceramides (such as N-acylsphing-4-enine) and glucose. Plays a central role in the degradation of complex lipids and the turnover of cellular membranes. Through the production of ceramides, participates in the PKC-activated salvage pathway of ceramide formation. Catalyzes the glucosylation of cholesterol, through a transglucosylation reaction where glucose is transferred from GlcCer to cholesterol. GlcCer containing mono-unsaturated fatty acids (such as beta-D-glucosyl-N-(9Z-octadecenoyl)-sphing-4-enine) are preferred as glucose donors for cholesterol glucosylation when compared with GlcCer containing same chain length of saturated fatty acids (such as beta-D-glucosyl-N-octadecanoyl-sphing-4-enine). Under specific conditions, may alternatively catalyze the reverse reaction, transferring glucose from cholesteryl 3-beta-D-glucoside to ceramide. Can also hydrolyze cholesteryl 3-beta-D-glucoside producing glucose and cholesterol. Catalyzes the hydrolysis of galactosylceramides/GalCers (such as beta-D-galactosyl-(1&lt;-&gt;1')-N-acylsphing-4-enine), as well as the transfer of galactose between GalCers and cholesterol in vitro, but with lower activity than with GlcCers. Contrary to GlcCer and GalCer, xylosylceramide/XylCer (such as beta-D-xyosyl-(1&lt;-&gt;1')-N-acylsphing-4-enine) is not a good substrate for hydrolysis, however it is a good xylose donor for transxylosylation activity to form cholesteryl 3-beta-D-xyloside. This is Lysosomal acid glucosylceramidase (GBA1) from Sus scrofa (Pig).